Consider the following 969-residue polypeptide: RNA polymerase-associated protein RapA (969 aa).

The 171-residue stretch at 164–334 (EVGRRYAPRV…FARLRLLDPD (171 aa)) folds into the Helicase ATP-binding domain. 177-184 (DEVGLGKT) lines the ATP pocket. The DEAH box motif lies at 280–283 (DEAH). A Helicase C-terminal domain is found at 492-668 (RVNWLLELLK…GKSDGLESLI (177 aa)).

The protein belongs to the SNF2/RAD54 helicase family. RapA subfamily. In terms of assembly, interacts with the RNAP. Has a higher affinity for the core RNAP than for the holoenzyme. Its ATPase activity is stimulated by binding to RNAP.

Transcription regulator that activates transcription by stimulating RNA polymerase (RNAP) recycling in case of stress conditions such as supercoiled DNA or high salt concentrations. Probably acts by releasing the RNAP, when it is trapped or immobilized on tightly supercoiled DNA. Does not activate transcription on linear DNA. Probably not involved in DNA repair. The protein is RNA polymerase-associated protein RapA of Aliivibrio fischeri (strain MJ11) (Vibrio fischeri).